We begin with the raw amino-acid sequence, 233 residues long: Ribose-5-phosphate isomerase A (233 aa).

Substrate is bound by residues 31 to 34 (SGST), 87 to 90 (DGAD), and 100 to 103 (KGGG). The active-site Proton acceptor is the glutamate 109. Residue lysine 127 participates in substrate binding.

Belongs to the ribose 5-phosphate isomerase family. In terms of assembly, homodimer.

The enzyme catalyses aldehydo-D-ribose 5-phosphate = D-ribulose 5-phosphate. Its pathway is carbohydrate degradation; pentose phosphate pathway; D-ribose 5-phosphate from D-ribulose 5-phosphate (non-oxidative stage): step 1/1. Its function is as follows. Catalyzes the reversible conversion of ribose-5-phosphate to ribulose 5-phosphate. This is Ribose-5-phosphate isomerase A from Chlamydia caviae (strain ATCC VR-813 / DSM 19441 / 03DC25 / GPIC) (Chlamydophila caviae).